The primary structure comprises 203 residues: Guanylate kinase (203 aa).

One can recognise a Guanylate kinase-like domain in the interval 5-183 (GVLYIISAPS…AVEELKSVVV (179 aa)). 12 to 19 (APSGAGKT) contacts ATP.

This sequence belongs to the guanylate kinase family.

It is found in the cytoplasm. It carries out the reaction GMP + ATP = GDP + ADP. Functionally, essential for recycling GMP and indirectly, cGMP. In Geobacter metallireducens (strain ATCC 53774 / DSM 7210 / GS-15), this protein is Guanylate kinase.